A 154-amino-acid chain; its full sequence is Myoglobin (154 aa).

Residues 2–148 form the Globin domain; sequence GLSDGEWQIV…FRNDIAAKYK (147 aa). Phosphoserine is present on Ser4. His65 lines the nitrite pocket. Position 65 (His65) interacts with O2. At Thr68 the chain carries Phosphothreonine. Position 94 (His94) interacts with heme b.

The protein belongs to the globin family. As to quaternary structure, monomeric.

Its subcellular location is the cytoplasm. It localises to the sarcoplasm. The catalysed reaction is Fe(III)-heme b-[protein] + nitric oxide + H2O = Fe(II)-heme b-[protein] + nitrite + 2 H(+). It catalyses the reaction H2O2 + AH2 = A + 2 H2O. Monomeric heme protein which primary function is to store oxygen and facilitate its diffusion within muscle tissues. Reversibly binds oxygen through a pentacoordinated heme iron and enables its timely and efficient release as needed during periods of heightened demand. Depending on the oxidative conditions of tissues and cells, and in addition to its ability to bind oxygen, it also has a nitrite reductase activity whereby it regulates the production of bioactive nitric oxide. Under stress conditions, like hypoxia and anoxia, it also protects cells against reactive oxygen species thanks to its pseudoperoxidase activity. In Lycaon pictus (African wild dog), this protein is Myoglobin (MB).